Consider the following 348-residue polypeptide: Phosphoribosylformylglycinamidine cyclo-ligase (348 aa).

The protein belongs to the AIR synthase family.

It localises to the cytoplasm. The catalysed reaction is 2-formamido-N(1)-(5-O-phospho-beta-D-ribosyl)acetamidine + ATP = 5-amino-1-(5-phospho-beta-D-ribosyl)imidazole + ADP + phosphate + H(+). Its pathway is purine metabolism; IMP biosynthesis via de novo pathway; 5-amino-1-(5-phospho-D-ribosyl)imidazole from N(2)-formyl-N(1)-(5-phospho-D-ribosyl)glycinamide: step 2/2. This is Phosphoribosylformylglycinamidine cyclo-ligase from Aromatoleum aromaticum (strain DSM 19018 / LMG 30748 / EbN1) (Azoarcus sp. (strain EbN1)).